We begin with the raw amino-acid sequence, 253 residues long: Small ribosomal subunit protein cS22 (253 aa).

The transit peptide at 1–56 (MATFLTNVVSIKPTIFSFQSESFTPLHTRVNVFSSKPFPSLAGTFSRSSRTRFIPY) directs the protein to the chloroplast. 2 RRM domains span residues 76–154 (RRVY…ITEK) and 177–253 (YKVY…VNKA).

It belongs to the chloroplast-specific ribosomal protein cS22 family. Component of the chloroplast small ribosomal subunit (SSU). Mature 70S chloroplast ribosomes of higher plants consist of a small (30S) and a large (50S) subunit. The 30S small subunit contains 1 molecule of ribosomal RNA (16S rRNA) and 24 different proteins. The 50S large subunit contains 3 rRNA molecules (23S, 5S and 4.5S rRNA) and 33 different proteins. As to expression, expressed constitutively in roots, stems, flower buds, flowers and leaves.

It is found in the plastid. The protein resides in the chloroplast. Component of the chloroplast ribosome (chloro-ribosome), a dedicated translation machinery responsible for the synthesis of chloroplast genome-encoded proteins, including proteins of the transcription and translation machinery and components of the photosynthetic apparatus. May have a role in the recruitment of stored chloroplast mRNAs for active protein synthesis. Bind single strand DNA (ssDNA) and RNA in vitro. Exhibits RNA chaperone activity. Negatively regulates resistance responses to abiotic stresses during seed germination (e.g. salt, dehydration, and low temperature) and seedling growth (e.g. salt). This chain is Small ribosomal subunit protein cS22, found in Arabidopsis thaliana (Mouse-ear cress).